The sequence spans 61 residues: Small ribosomal subunit protein uS14 (61 aa).

Zn(2+)-binding residues include C24, C27, C40, and C43.

This sequence belongs to the universal ribosomal protein uS14 family. Zinc-binding uS14 subfamily. In terms of assembly, part of the 30S ribosomal subunit. Contacts proteins S3 and S10. Requires Zn(2+) as cofactor.

Functionally, binds 16S rRNA, required for the assembly of 30S particles and may also be responsible for determining the conformation of the 16S rRNA at the A site. This Symbiobacterium thermophilum (strain DSM 24528 / JCM 14929 / IAM 14863 / T) protein is Small ribosomal subunit protein uS14.